The chain runs to 706 residues: Melanopsin (706 aa).

Residues 1–86 are Extracellular-facing; that stretch reads MTEIPSFQPP…VWDIPPLAHY (86 aa). N-linked (GlcNAc...) asparagine glycans are attached at residues Asn12, Asn64, and Asn69. A helical membrane pass occupies residues 87-107; sequence IVGTAVFCIGCCGMFGNAVVV. Topologically, residues 108–121 are cytoplasmic; it reads YSFIKSKGLRTPAN. Residues 122-142 form a helical membrane-spanning segment; the sequence is FFIINLALSDFLMNLTNMPIF. Over 143 to 159 the chain is Extracellular; the sequence is AVNSAFQRWLLSDFACE. A disulfide bridge connects residues Cys158 and Cys236. A helical transmembrane segment spans residues 160-180; sequence LYGFAGGLFGCLSINTLMAIS. The Cytoplasmic portion of the chain corresponds to 181–201; sequence MDRYLVITKPFLVMRIVTKQR. The chain crosses the membrane as a helical span at residues 202-222; that stretch reads VMFAILLLWIWSLVWALPPLF. The Extracellular portion of the chain corresponds to 223-248; sequence GWSAYVSEGFGTSCTFDYMTPKLSYH. The chain crosses the membrane as a helical span at residues 249 to 269; the sequence is IFTYIIFFTMYFIPGGVMIYC. At 270–314 the chain is on the cytoplasmic side; it reads YYNIFATVKSGDKQFGKAVKEMAHEDVKNKAQQERQRKNEIKTAK. A helical membrane pass occupies residues 315–335; it reads IAFIVISLFMSAWTPYAVVSA. The Extracellular portion of the chain corresponds to 336 to 351; the sequence is LGTLGYQDLVTPYLQS. Residues 352–372 traverse the membrane as a helical segment; the sequence is IPAMFAKSSAVYSPIVYAITY. N6-(retinylidene)lysine is present on Lys358. At 373-706 the chain is on the cytoplasmic side; sequence PKFREAVKKH…LSEAHDETVL (334 aa). Disordered regions lie at residues 393 to 446, 571 to 599, and 630 to 658; these read SEEE…RQDT, RTES…SFNT, and QSSE…NETE. 2 stretches are compositionally biased toward low complexity: residues 404 to 418 and 426 to 442; these read QSSA…QTTA and SVDS…SGVS. The segment covering 571–593 has biased composition (basic and acidic residues); sequence RTESGYDRSQDSQRKKVVGDTHR. Over residues 645–658 the composition is skewed to acidic residues; that stretch reads GITEVDTDSENETE.

This sequence belongs to the G-protein coupled receptor 1 family. Opsin subfamily. Expressed in Joseph cells and photoreceptor cells of the dorsal ocelli.

Its subcellular location is the cell membrane. Its function is as follows. Photoreceptor implicated in non-image-forming responses to light. Photoisomerizes covalently bound all-trans retinal back to 11-cis retinal. Most likely coupled to the G(q) signaling cascade. The chain is Melanopsin from Branchiostoma belcheri (Amphioxus).